Here is a 264-residue protein sequence, read N- to C-terminus: Hemin import ATP-binding protein HmuV (264 aa).

The ABC transporter domain maps to 2–241 (IEVSGVSVRL…ETMLSVFGLR (240 aa)). 34–41 (GPNGSGKT) provides a ligand contact to ATP.

The protein belongs to the ABC transporter superfamily. Heme (hemin) importer (TC 3.A.1.14.5) family. As to quaternary structure, the complex is composed of two ATP-binding proteins (HmuV), two transmembrane proteins (HmuU) and a solute-binding protein (HmuT).

It is found in the cell inner membrane. Part of the ABC transporter complex HmuTUV involved in hemin import. Responsible for energy coupling to the transport system. The chain is Hemin import ATP-binding protein HmuV from Rhizobium leguminosarum.